Reading from the N-terminus, the 66-residue chain is Large ribosomal subunit protein bL33c (66 aa).

This sequence belongs to the bacterial ribosomal protein bL33 family.

It is found in the plastid. The protein resides in the chloroplast. The chain is Large ribosomal subunit protein bL33c from Gossypium barbadense (Sea Island cotton).